A 283-amino-acid chain; its full sequence is 4-diphosphocytidyl-2-C-methyl-D-erythritol kinase (283 aa).

Residue Lys-10 is part of the active site. Residue 99–109 (PMGGGLGGGSS) coordinates ATP. The active site involves Asp-141.

This sequence belongs to the GHMP kinase family. IspE subfamily. Homodimer.

The catalysed reaction is 4-CDP-2-C-methyl-D-erythritol + ATP = 4-CDP-2-C-methyl-D-erythritol 2-phosphate + ADP + H(+). Its pathway is isoprenoid biosynthesis; isopentenyl diphosphate biosynthesis via DXP pathway; isopentenyl diphosphate from 1-deoxy-D-xylulose 5-phosphate: step 3/6. Its function is as follows. Catalyzes the phosphorylation of the position 2 hydroxy group of 4-diphosphocytidyl-2C-methyl-D-erythritol. The polypeptide is 4-diphosphocytidyl-2-C-methyl-D-erythritol kinase (Escherichia coli O157:H7 (strain EC4115 / EHEC)).